Here is a 131-residue protein sequence, read N- to C-terminus: Transcription antitermination protein NusB (131 aa).

It belongs to the NusB family.

Functionally, involved in transcription antitermination. Required for transcription of ribosomal RNA (rRNA) genes. Binds specifically to the boxA antiterminator sequence of the ribosomal RNA (rrn) operons. The chain is Transcription antitermination protein NusB from Campylobacter fetus subsp. fetus (strain 82-40).